The chain runs to 545 residues: Chaperonin GroEL (545 aa).

Residues 29 to 32 (TLGP), K50, 86 to 90 (DGTTT), G415, and D495 each bind ATP.

This sequence belongs to the chaperonin (HSP60) family. In terms of assembly, forms a cylinder of 14 subunits composed of two heptameric rings stacked back-to-back. Interacts with the co-chaperonin GroES.

The protein localises to the cytoplasm. The catalysed reaction is ATP + H2O + a folded polypeptide = ADP + phosphate + an unfolded polypeptide.. Functionally, together with its co-chaperonin GroES, plays an essential role in assisting protein folding. The GroEL-GroES system forms a nano-cage that allows encapsulation of the non-native substrate proteins and provides a physical environment optimized to promote and accelerate protein folding. The sequence is that of Chaperonin GroEL from Porphyromonas gingivalis (strain ATCC BAA-308 / W83).